The primary structure comprises 301 residues: Light-independent protochlorophyllide reductase iron-sulfur ATP-binding protein (301 aa).

Over residues 1 to 13 the composition is skewed to low complexity; it reads MNVTLRPPLTTAP. The disordered stretch occupies residues 1–21; the sequence is MNVTLRPPLTTAPRRPDGAGS. ATP is bound by residues 45–50 and Lys-74; that span reads GIGKST. Residue Ser-49 participates in Mg(2+) binding. 2 residues coordinate [4Fe-4S] cluster: Cys-130 and Cys-164. Residues 215–216 and 239–241 contribute to the ATP site; these read NR and PDL.

It belongs to the NifH/BchL/ChlL family. Homodimer. Protochlorophyllide reductase is composed of three subunits; BchL, BchN and BchB. The cofactor is [4Fe-4S] cluster.

The enzyme catalyses chlorophyllide a + oxidized 2[4Fe-4S]-[ferredoxin] + 2 ADP + 2 phosphate = protochlorophyllide a + reduced 2[4Fe-4S]-[ferredoxin] + 2 ATP + 2 H2O. It participates in porphyrin-containing compound metabolism; bacteriochlorophyll biosynthesis (light-independent). Functionally, component of the dark-operative protochlorophyllide reductase (DPOR) that uses Mg-ATP and reduced ferredoxin to reduce ring D of protochlorophyllide (Pchlide) to form chlorophyllide a (Chlide). This reaction is light-independent. The L component serves as a unique electron donor to the NB-component of the complex, and binds Mg-ATP. This chain is Light-independent protochlorophyllide reductase iron-sulfur ATP-binding protein, found in Bradyrhizobium sp. (strain BTAi1 / ATCC BAA-1182).